Consider the following 230-residue polypeptide: Sugar fermentation stimulation protein homolog (230 aa).

This sequence belongs to the SfsA family.

In Clostridium kluyveri (strain NBRC 12016), this protein is Sugar fermentation stimulation protein homolog.